Consider the following 98-residue polypeptide: Small ribosomal subunit protein bS20 (98 aa).

It belongs to the bacterial ribosomal protein bS20 family.

Its function is as follows. Binds directly to 16S ribosomal RNA. This Synechococcus sp. (strain CC9902) protein is Small ribosomal subunit protein bS20.